A 396-amino-acid chain; its full sequence is Elongation factor Tu (396 aa).

Residues 10 to 206 (KPHVNVGTIG…ALDSYIPEPT (197 aa)) enclose the tr-type G domain. The segment at 19–26 (GHVDHGKT) is G1. Residue 19–26 (GHVDHGKT) participates in GTP binding. Threonine 26 is a binding site for Mg(2+). The tract at residues 60–64 (GITIS) is G2. The G3 stretch occupies residues 81–84 (DCPG). GTP-binding positions include 81-85 (DCPGH) and 136-139 (NKAD). The segment at 136–139 (NKAD) is G4. Residues 174–176 (SAL) form a G5 region.

It belongs to the TRAFAC class translation factor GTPase superfamily. Classic translation factor GTPase family. EF-Tu/EF-1A subfamily. In terms of assembly, monomer.

The protein localises to the cytoplasm. It catalyses the reaction GTP + H2O = GDP + phosphate + H(+). Its function is as follows. GTP hydrolase that promotes the GTP-dependent binding of aminoacyl-tRNA to the A-site of ribosomes during protein biosynthesis. The chain is Elongation factor Tu from Hydrogenovibrio crunogenus (strain DSM 25203 / XCL-2) (Thiomicrospira crunogena).